The chain runs to 396 residues: Aspartate aminotransferase (396 aa).

L-aspartate contacts are provided by Gly-34, Trp-130, and Asn-183. Lys-246 bears the N6-(pyridoxal phosphate)lysine mark. L-aspartate is bound at residue Arg-374.

It belongs to the class-I pyridoxal-phosphate-dependent aminotransferase family. Homodimer. Requires pyridoxal 5'-phosphate as cofactor.

Its subcellular location is the cytoplasm. It carries out the reaction L-aspartate + 2-oxoglutarate = oxaloacetate + L-glutamate. The sequence is that of Aspartate aminotransferase (aspC) from Escherichia coli (strain K12).